The sequence spans 556 residues: Formate--tetrahydrofolate ligase 1 (556 aa).

65–72 is an ATP binding site; sequence TPAGEGKS.

Belongs to the formate--tetrahydrofolate ligase family.

It carries out the reaction (6S)-5,6,7,8-tetrahydrofolate + formate + ATP = (6R)-10-formyltetrahydrofolate + ADP + phosphate. The protein operates within one-carbon metabolism; tetrahydrofolate interconversion. The sequence is that of Formate--tetrahydrofolate ligase 1 from Streptococcus pyogenes serotype M18 (strain MGAS8232).